The chain runs to 249 residues: Homeobox-leucine zipper protein HOX6 (249 aa).

Residues Met-1–Lys-32 are disordered. The segment covering Gly-15–Ala-27 has biased composition (gly residues). Residues Ala-27–Gln-86 constitute a DNA-binding region (homeobox). Residues Lys-85–Pro-129 are leucine-zipper. The segment at Phe-194 to Glu-249 is disordered. The segment covering Phe-212–Pro-242 has biased composition (polar residues).

Belongs to the HD-ZIP homeobox family. Class I subfamily. In terms of tissue distribution, expressed in seedlings, roots, leaves, nodes, internodes, flowers and embryo.

It is found in the nucleus. Its function is as follows. Probable transcription factor that binds to the DNA sequence 5'-CAAT[AT]ATTG-3'. The polypeptide is Homeobox-leucine zipper protein HOX6 (HOX6) (Oryza sativa subsp. indica (Rice)).